Consider the following 612-residue polypeptide: Protein NorD (612 aa).

The tract at residues 220-246 (EGEGDLETPPSGQSRQRNGARRVDDSS) is disordered. The VWFA domain occupies 420–609 (DLACLLLADL…FPPAAAVQAT (190 aa)).

Functionally, component of the anaerobic respiratory chain that transforms nitrate to dinitrogen (denitrification). The protein is Protein NorD (norD) of Stutzerimonas stutzeri (Pseudomonas stutzeri).